Reading from the N-terminus, the 145-residue chain is Small ribosomal subunit protein eS19 (145 aa).

At K23 the chain carries N6-acetyllysine. An Omega-N-methylarginine modification is found at R67. N6-acetyllysine occurs at positions 111 and 115. K143 is modified (N6-succinyllysine).

Belongs to the eukaryotic ribosomal protein eS19 family. In terms of assembly, component of the small ribosomal subunit. Part of the small subunit (SSU) processome, composed of more than 70 proteins and the RNA chaperone small nucleolar RNA (snoRNA) U3. Interacts with RPS19BP1.

It is found in the cytoplasm. Its subcellular location is the nucleus. The protein resides in the nucleolus. In terms of biological role, component of the small ribosomal subunit. The ribosome is a large ribonucleoprotein complex responsible for the synthesis of proteins in the cell. Required for pre-rRNA processing and maturation of 40S ribosomal subunits. Part of the small subunit (SSU) processome, first precursor of the small eukaryotic ribosomal subunit. During the assembly of the SSU processome in the nucleolus, many ribosome biogenesis factors, an RNA chaperone and ribosomal proteins associate with the nascent pre-rRNA and work in concert to generate RNA folding, modifications, rearrangements and cleavage as well as targeted degradation of pre-ribosomal RNA by the RNA exosome. The sequence is that of Small ribosomal subunit protein eS19 (Rps19) from Rattus norvegicus (Rat).